The following is a 287-amino-acid chain: uncharacterized protein (287 aa).

Basic and acidic residues predominate over residues 1–17; that stretch reads MRWQGRRESDNVEDRRN. Positions 1-29 are disordered; it reads MRWQGRRESDNVEDRRNSSGGPSMGGPGF. A helical membrane pass occupies residues 38 to 60; sequence LILLIVVLVAGYYGVDLTGLMTG.

It is found in the membrane. This is an uncharacterized protein from Escherichia coli O6:H1 (strain CFT073 / ATCC 700928 / UPEC).